The chain runs to 86 residues: Neurotoxin LmNaTx1 (86 aa).

Residues 1-18 (MKILIIFVIAITVVGVQS) form the signal peptide. In terms of domain architecture, LCN-type CS-alpha/beta spans 19–85 (KDGYPIYSTG…VWTYAENTCG (67 aa)). 4 disulfide bridges follow: C33/C84, C37/C58, C44/C65, and C48/C67. At C84 the chain carries Cysteine amide.

The protein belongs to the long (4 C-C) scorpion toxin superfamily. Sodium channel inhibitor family. Beta subfamily. As to expression, expressed by the venom gland.

The protein localises to the secreted. Functionally, binds voltage-independently at site-4 of sodium channels (Nav) and shift the voltage of activation toward more negative potentials thereby affecting sodium channel activation and promoting spontaneous and repetitive firing. In Lychas mucronatus (Chinese swimming scorpion), this protein is Neurotoxin LmNaTx1.